Consider the following 325-residue polypeptide: uncharacterized protein (325 aa).

Positions 49 to 151 (RYEHSIGVML…ELCADRTDYT (103 aa)) constitute an HD domain.

This is an uncharacterized protein from Bacillus subtilis (strain 168).